A 158-amino-acid chain; its full sequence is Small ribosomal subunit protein uS9 (158 aa).

The protein belongs to the universal ribosomal protein uS9 family.

This is Small ribosomal subunit protein uS9 from Nitrobacter winogradskyi (strain ATCC 25391 / DSM 10237 / CIP 104748 / NCIMB 11846 / Nb-255).